The sequence spans 515 residues: Serine--tRNA ligase, cytoplasmic (515 aa).

An interaction with tRNA region spans residues 9–61 (RTDKGGDPEIIRETQRKRFKDVSLVDKLVQADTEWRKCRFTADNLNKAKNLCS). L-serine contacts are provided by threonine 271 and arginine 302. Residues 302–304 (RQE) and 318–321 (VHQF) each bind ATP. Glutamate 325 provides a ligand contact to L-serine. 391–394 (ELVS) contributes to the ATP binding site. Asparagine 427 is an L-serine binding site. Positions 475–515 (PIDQETTKKQKKQQEGGKKKKHQGGDADLENKVENMSVNDS) are disordered. The segment covering 479-507 (ETTKKQKKQQEGGKKKKHQGGDADLENKV) has biased composition (basic and acidic residues). The Nuclear localization signal motif lies at 482–494 (KKQKKQQEGGKKK).

This sequence belongs to the class-II aminoacyl-tRNA synthetase family. Type-1 seryl-tRNA synthetase subfamily.

The protein localises to the cytoplasm. It is found in the nucleus. The enzyme catalyses tRNA(Ser) + L-serine + ATP = L-seryl-tRNA(Ser) + AMP + diphosphate + H(+). It carries out the reaction tRNA(Sec) + L-serine + ATP = L-seryl-tRNA(Sec) + AMP + diphosphate + H(+). Functionally, catalyzes the attachment of serine to tRNA(Ser) in a two-step reaction: serine is first activated by ATP to form Ser-AMP and then transferred to the acceptor end of tRNA(Ser). Is probably also able to aminoacylate tRNA(Sec) with serine, to form the misacylated tRNA L-seryl-tRNA(Sec), which will be further converted into selenocysteinyl-tRNA(Sec). In the nucleus, binds to the vegfa core promoter and prevents myc binding and transcriptional activation by myc. Thereby inhibits the production of vegfa and sprouting angiogenesis mediated by vegfa. The sequence is that of Serine--tRNA ligase, cytoplasmic (sars1) from Danio rerio (Zebrafish).